We begin with the raw amino-acid sequence, 256 residues long: Hydroxyacylglutathione hydrolase (256 aa).

Zn(2+)-binding residues include H55, H57, D59, H60, H113, D132, and H170.

Belongs to the metallo-beta-lactamase superfamily. Glyoxalase II family. Monomer. Requires Zn(2+) as cofactor.

It carries out the reaction an S-(2-hydroxyacyl)glutathione + H2O = a 2-hydroxy carboxylate + glutathione + H(+). The protein operates within secondary metabolite metabolism; methylglyoxal degradation; (R)-lactate from methylglyoxal: step 2/2. Functionally, thiolesterase that catalyzes the hydrolysis of S-D-lactoyl-glutathione to form glutathione and D-lactic acid. The sequence is that of Hydroxyacylglutathione hydrolase from Methylococcus capsulatus (strain ATCC 33009 / NCIMB 11132 / Bath).